The following is a 360-amino-acid chain: Protein RecA (360 aa).

Position 64–71 (G64–T71) interacts with ATP. The tract at residues Q333–I360 is disordered.

Belongs to the RecA family.

The protein resides in the cytoplasm. Can catalyze the hydrolysis of ATP in the presence of single-stranded DNA, the ATP-dependent uptake of single-stranded DNA by duplex DNA, and the ATP-dependent hybridization of homologous single-stranded DNAs. It interacts with LexA causing its activation and leading to its autocatalytic cleavage. This Francisella philomiragia subsp. philomiragia (strain ATCC 25017 / CCUG 19701 / FSC 153 / O#319-036) protein is Protein RecA.